The chain runs to 425 residues: Threonylcarbamoyladenosine tRNA methylthiotransferase (425 aa).

The region spanning 60–295 (RKNELIEVLS…RSYTRYTDER (236 aa)) is the Radical SAM core domain. [4Fe-4S] cluster contacts are provided by Cys74, Cys78, and Cys81. Positions 293 to 355 (DERIGELHRV…KFSMISKPAS (63 aa)) constitute a TRAM domain. Residues 362 to 382 (PLSLMHLFPLAVFCLVLITLY) traverse the membrane as a helical segment.

This sequence belongs to the methylthiotransferase family. CDKAL1 subfamily. The cofactor is [4Fe-4S] cluster.

The protein localises to the membrane. It carries out the reaction N(6)-L-threonylcarbamoyladenosine(37) in tRNA + (sulfur carrier)-SH + AH2 + 2 S-adenosyl-L-methionine = 2-methylsulfanyl-N(6)-L-threonylcarbamoyladenosine(37) in tRNA + (sulfur carrier)-H + 5'-deoxyadenosine + L-methionine + A + S-adenosyl-L-homocysteine + 2 H(+). In terms of biological role, catalyzes the methylthiolation of N6-threonylcarbamoyladenosine (t(6)A), leading to the formation of 2-methylthio-N6-threonylcarbamoyladenosine (ms(2)t(6)A) at position 37 in tRNAs that read codons beginning with adenine. The chain is Threonylcarbamoyladenosine tRNA methylthiotransferase from Caenorhabditis elegans.